The primary structure comprises 83 residues: MNNTAQQDVSALSFEQAVEELERIVSALERGDVALDKSIEIYERGEALKKHCEALLKAAEDRIEKIRLDRAGRPQGVEPLDAE.

The protein belongs to the XseB family. Heterooligomer composed of large and small subunits.

The protein localises to the cytoplasm. It carries out the reaction Exonucleolytic cleavage in either 5'- to 3'- or 3'- to 5'-direction to yield nucleoside 5'-phosphates.. In terms of biological role, bidirectionally degrades single-stranded DNA into large acid-insoluble oligonucleotides, which are then degraded further into small acid-soluble oligonucleotides. The polypeptide is Exodeoxyribonuclease 7 small subunit (Sinorhizobium medicae (strain WSM419) (Ensifer medicae)).